Here is a 221-residue protein sequence, read N- to C-terminus: Zingipain-2 (221 aa).

Cystine bridges form between cysteine 24–cysteine 65 and cysteine 58–cysteine 98. Cysteine 27 is a catalytic residue. N-linked (GlcNAc...) asparagine glycans are attached at residues asparagine 99 and asparagine 156. A disulfide bridge connects residues cysteine 155 and cysteine 206. Histidine 161 is an active-site residue.

This sequence belongs to the peptidase C1 family.

It catalyses the reaction Preferential cleavage of peptides with a proline residue at the P2 position.. Functionally, cysteine proteinase with a specific activity toward peptides with a proline residue at the P2 position. The protein is Zingipain-2 of Zingiber officinale (Ginger).